The sequence spans 227 residues: Translation initiation factor 6 (227 aa).

Belongs to the eIF-6 family.

In terms of biological role, binds to the 50S ribosomal subunit and prevents its association with the 30S ribosomal subunit to form the 70S initiation complex. This Staphylothermus marinus (strain ATCC 43588 / DSM 3639 / JCM 9404 / F1) protein is Translation initiation factor 6.